A 373-amino-acid polypeptide reads, in one-letter code: Phospho-N-acetylmuramoyl-pentapeptide-transferase (373 aa).

The next 10 helical transmembrane spans lie at 34–54, 78–98, 100–120, 141–161, 181–201, 212–232, 252–272, 275–295, 301–321, and 350–370; these read GALF…ISSL, TPTM…LLWA, LANV…AIGF, LGLE…TALS, FMLN…VSAG, GLAI…AYLA, LAVV…FNAP, AIFM…TVAV, IVMA…IIQV, and QVVV…LSTL.

Belongs to the glycosyltransferase 4 family. MraY subfamily. It depends on Mg(2+) as a cofactor.

The protein localises to the cell inner membrane. It catalyses the reaction UDP-N-acetyl-alpha-D-muramoyl-L-alanyl-gamma-D-glutamyl-meso-2,6-diaminopimeloyl-D-alanyl-D-alanine + di-trans,octa-cis-undecaprenyl phosphate = di-trans,octa-cis-undecaprenyl diphospho-N-acetyl-alpha-D-muramoyl-L-alanyl-D-glutamyl-meso-2,6-diaminopimeloyl-D-alanyl-D-alanine + UMP. It functions in the pathway cell wall biogenesis; peptidoglycan biosynthesis. Functionally, catalyzes the initial step of the lipid cycle reactions in the biosynthesis of the cell wall peptidoglycan: transfers peptidoglycan precursor phospho-MurNAc-pentapeptide from UDP-MurNAc-pentapeptide onto the lipid carrier undecaprenyl phosphate, yielding undecaprenyl-pyrophosphoryl-MurNAc-pentapeptide, known as lipid I. This Rhizobium rhizogenes (strain K84 / ATCC BAA-868) (Agrobacterium radiobacter) protein is Phospho-N-acetylmuramoyl-pentapeptide-transferase.